The chain runs to 758 residues: Ferrichrome receptor FcuA (758 aa).

The signal sequence occupies residues 1 to 36 (MNQTISSRAPQKRLAPRLLCVMIGAALGTLSASSWA). The short motif at 66–73 (DTITVVGA) is the TonB box element. The TBDR plug domain maps to 106 to 216 (DARNVPFNVI…VGGMINLEPK (111 aa)). Positions 221-758 (TPLTRVTVDY…ALKLSVSMDF (538 aa)) constitute a TBDR beta-barrel domain. Residues 741-758 (YIYQGDPRALKLSVSMDF) carry the TonB C-terminal box motif.

This sequence belongs to the TonB-dependent receptor family.

Its subcellular location is the cell outer membrane. Its function is as follows. Receptor for the hydroxamate siderophore, ferrichrome. Binds also to most other ferrichrome derivatives except enantio ferrichrome and ferric rhodotorulate. The chain is Ferrichrome receptor FcuA (fcuA) from Yersinia enterocolitica.